Consider the following 98-residue polypeptide: uncharacterized protein (98 aa).

In terms of domain architecture, HTH cro/C1-type spans 37–91 (LITSRQQLGISQKQLETLSGVKQPMIARIEKGQTNPQLETLLKLLAPLGKTLSIV). A DNA-binding region (H-T-H motif) is located at residues 48-67 (QKQLETLSGVKQPMIARIEK).

This is an uncharacterized protein from Haemophilus influenzae (strain ATCC 51907 / DSM 11121 / KW20 / Rd).